Reading from the N-terminus, the 311-residue chain is 4-hydroxy-tetrahydrodipicolinate synthase (311 aa).

Thr-51 is a pyruvate binding site. Residue Tyr-140 is the Proton donor/acceptor of the active site. The Schiff-base intermediate with substrate role is filled by Lys-168. Ile-209 serves as a coordination point for pyruvate.

It belongs to the DapA family. As to quaternary structure, homotetramer; dimer of dimers.

It localises to the cytoplasm. The catalysed reaction is L-aspartate 4-semialdehyde + pyruvate = (2S,4S)-4-hydroxy-2,3,4,5-tetrahydrodipicolinate + H2O + H(+). The protein operates within amino-acid biosynthesis; L-lysine biosynthesis via DAP pathway; (S)-tetrahydrodipicolinate from L-aspartate: step 3/4. Its function is as follows. Catalyzes the condensation of (S)-aspartate-beta-semialdehyde [(S)-ASA] and pyruvate to 4-hydroxy-tetrahydrodipicolinate (HTPA). The protein is 4-hydroxy-tetrahydrodipicolinate synthase of Streptococcus pneumoniae (strain ATCC BAA-255 / R6).